We begin with the raw amino-acid sequence, 975 residues long: Glycine dehydrogenase (decarboxylating) (975 aa).

Residue K723 is modified to N6-(pyridoxal phosphate)lysine.

This sequence belongs to the GcvP family. In terms of assembly, the glycine cleavage system is composed of four proteins: P, T, L and H. It depends on pyridoxal 5'-phosphate as a cofactor.

It carries out the reaction N(6)-[(R)-lipoyl]-L-lysyl-[glycine-cleavage complex H protein] + glycine + H(+) = N(6)-[(R)-S(8)-aminomethyldihydrolipoyl]-L-lysyl-[glycine-cleavage complex H protein] + CO2. The glycine cleavage system catalyzes the degradation of glycine. The P protein binds the alpha-amino group of glycine through its pyridoxal phosphate cofactor; CO(2) is released and the remaining methylamine moiety is then transferred to the lipoamide cofactor of the H protein. The chain is Glycine dehydrogenase (decarboxylating) from Burkholderia vietnamiensis (strain G4 / LMG 22486) (Burkholderia cepacia (strain R1808)).